The primary structure comprises 97 residues: Cytochrome c oxidase subunit 4 isoform 1, mitochondrial (97 aa).

The transit peptide at 1-22 (MLATRVFNLIGRRAISTSVCVR) directs the protein to the mitochondrion. Lys29 is subject to N6-acetyllysine; alternate. Position 29 is an N6-succinyllysine; alternate (Lys29). Lys53 carries the post-translational modification N6-acetyllysine. A phosphoserine mark is found at Ser56 and Ser58. Lys60 bears the N6-acetyllysine; alternate mark. An N6-succinyllysine; alternate modification is found at Lys60. Lys67 is subject to N6-acetyllysine.

It belongs to the cytochrome c oxidase IV family. As to quaternary structure, component of the cytochrome c oxidase (complex IV, CIV), a multisubunit enzyme composed of 14 subunits. The complex is composed of a catalytic core of 3 subunits MT-CO1, MT-CO2 and MT-CO3, encoded in the mitochondrial DNA, and 11 supernumerary subunits COX4I, COX5A, COX5B, COX6A, COX6B, COX6C, COX7A, COX7B, COX7C, COX8 and NDUFA4, which are encoded in the nuclear genome. The complex exists as a monomer or a dimer and forms supercomplexes (SCs) in the inner mitochondrial membrane with NADH-ubiquinone oxidoreductase (complex I, CI) and ubiquinol-cytochrome c oxidoreductase (cytochrome b-c1 complex, complex III, CIII), resulting in different assemblies (supercomplex SCI(1)III(2)IV(1) and megacomplex MCI(2)III(2)IV(2)). Interacts with PHB2; the interaction decreases in absence of SPHK2. Interacts with AFG1L. Interacts with ABCB7; this interaction allows the regulation of cellular iron homeostasis and cellular reactive oxygen species (ROS) levels in cardiomyocytes. Interacts with FLVCR2; this interaction occurs in the absence of heme and is disrupted upon heme binding. Interacts with IRGC.

It localises to the mitochondrion inner membrane. It functions in the pathway energy metabolism; oxidative phosphorylation. Functionally, component of the cytochrome c oxidase, the last enzyme in the mitochondrial electron transport chain which drives oxidative phosphorylation. The respiratory chain contains 3 multisubunit complexes succinate dehydrogenase (complex II, CII), ubiquinol-cytochrome c oxidoreductase (cytochrome b-c1 complex, complex III, CIII) and cytochrome c oxidase (complex IV, CIV), that cooperate to transfer electrons derived from NADH and succinate to molecular oxygen, creating an electrochemical gradient over the inner membrane that drives transmembrane transport and the ATP synthase. Cytochrome c oxidase is the component of the respiratory chain that catalyzes the reduction of oxygen to water. Electrons originating from reduced cytochrome c in the intermembrane space (IMS) are transferred via the dinuclear copper A center (CU(A)) of subunit 2 and heme A of subunit 1 to the active site in subunit 1, a binuclear center (BNC) formed by heme A3 and copper B (CU(B)). The BNC reduces molecular oxygen to 2 water molecules using 4 electrons from cytochrome c in the IMS and 4 protons from the mitochondrial matrix. In Sus scrofa (Pig), this protein is Cytochrome c oxidase subunit 4 isoform 1, mitochondrial (COX4I1).